The following is a 122-amino-acid chain: Glycine cleavage system H protein (122 aa).

Residues 19–101 (MVTVGVTHYA…ETEGWLWKMT (83 aa)) form the Lipoyl-binding domain. An N6-lipoyllysine modification is found at Lys60.

The protein belongs to the GcvH family. As to quaternary structure, the glycine cleavage system is composed of four proteins: P, T, L and H. (R)-lipoate is required as a cofactor.

The glycine cleavage system catalyzes the degradation of glycine. The H protein shuttles the methylamine group of glycine from the P protein to the T protein. This Bartonella tribocorum (strain CIP 105476 / IBS 506) protein is Glycine cleavage system H protein.